Here is a 103-residue protein sequence, read N- to C-terminus: MYAVFQSGGKQHRVAPGHTVRLEKLEVATGSTVEFDQVLLIADGEKVHVGAPLVAGGKVVAEVVSHGRGEKVTIVKFRRRKHHDKKMGHRQWFTEVKITAINA.

The protein belongs to the bacterial ribosomal protein bL21 family. As to quaternary structure, part of the 50S ribosomal subunit. Contacts protein L20.

In terms of biological role, this protein binds to 23S rRNA in the presence of protein L20. The protein is Large ribosomal subunit protein bL21 of Shewanella sp. (strain MR-7).